The primary structure comprises 1266 residues: Rho GTPase-activating protein 29 (1266 aa).

Residues serine 171, serine 176, serine 179, and serine 190 each carry the phosphoserine modification. One can recognise an F-BAR domain in the interval 192–462; it reads IELDNLLLKN…SAKLYDPGQE (271 aa). The stretch at 296–418 forms a coiled coil; it reads RKNEMEKQRK…EILTQLRTLV (123 aa). A disordered region spans residues 482 to 501; it reads NVNKQMTNSPQTSGYEPADS. Positions 483–495 are enriched in polar residues; that stretch reads VNKQMTNSPQTSG. Serine 501, serine 521, and serine 554 each carry phosphoserine. The segment covering 542–561 has biased composition (low complexity); that stretch reads DSESTGGSSESRSLDSESIS. Positions 542–601 are disordered; it reads DSESTGGSSESRSLDSESISPGDFHRKLPRTPSSGTMSSADDLDEREPPSPSEAGPNSLG. A Phorbol-ester/DAG-type zinc finger spans residues 614–659; the sequence is THKFRKLRSPTKCRDCDGIVMFPGVECEECLLVCHRKCLENLVIIC. Residues 673–888 enclose the Rho-GAP domain; it reads AEFIQVAKKE…FLITYSQKIF (216 aa). Phosphoserine occurs at positions 920, 956, and 1028. Disordered stretches follow at residues 1039–1081, 1116–1157, and 1209–1266; these read SSPT…KVNG, GLTV…ATAV, and KSDP…PQFV. Residues 1072-1081 show a composition bias toward polar residues; that stretch reads SNTTRSKVNG. The span at 1124–1136 shows a compositional bias: basic and acidic residues; sequence NRDHPGSKAHAEP. Serine 1149 and serine 1151 each carry phosphoserine. Residues 1256 to 1266 show a composition bias toward acidic residues; it reads EDLEDEIPQFV. Residues 1263 to 1266 are interaction with PTPN13/PTPL1; sequence PQFV.

Interacts with PTPN13/PTPL1. Interacts with RAP2A via its coiled coil domain. Interacts with RASIP1.

Functionally, GTPase activator for the Rho-type GTPases by converting them to an inactive GDP-bound state. Has strong activity toward RHOA, and weaker activity toward RAC1 and CDC42. May act as a specific effector of RAP2A to regulate Rho. In concert with RASIP1, suppresses RhoA signaling and dampens ROCK and MYH9 activities in endothelial cells and plays an essential role in blood vessel tubulogenesis. In Mus musculus (Mouse), this protein is Rho GTPase-activating protein 29 (Arhgap29).